We begin with the raw amino-acid sequence, 515 residues long: 1-pyrroline-5-carboxylate dehydrogenase (515 aa).

Residues E286 and C320 contribute to the active site.

The protein belongs to the aldehyde dehydrogenase family. RocA subfamily.

It carries out the reaction L-glutamate 5-semialdehyde + NAD(+) + H2O = L-glutamate + NADH + 2 H(+). The protein operates within amino-acid degradation; L-proline degradation into L-glutamate; L-glutamate from L-proline: step 2/2. This chain is 1-pyrroline-5-carboxylate dehydrogenase, found in Bacillus anthracis (strain A0248).